A 296-amino-acid polypeptide reads, in one-letter code: Putative mannose 6-phosphate receptor-like protein C530.09c (296 aa).

The first 25 residues, 1–25 (MRLLTCLINVLAGLTLFSQFQRAFG), serve as a signal peptide directing secretion. The Lumenal segment spans residues 26–206 (LTITRRGFKV…TVKKDSTLNP (181 aa)). The MRH domain occupies 42-197 (PFCALHHPNT…EWKTIHACPT (156 aa)). Cys44 and Cys87 form a disulfide bridge. N-linked (GlcNAc...) asparagine glycosylation is found at Asn64, Asn81, Asn93, Asn96, and Asn143. Cystine bridges form between Cys147-Cys183 and Cys163-Cys195. The chain crosses the membrane as a helical span at residues 207-227 (VSVFLLFCAIAFLAYFVGGFV). Residues 228–249 (YQRVVLNARGLRQIPNYEMWRS) lie on the Cytoplasmic side of the membrane. A helical membrane pass occupies residues 250-270 (LFGFISDIVIILYSSILSILP). Over 271–296 (SSITRMRGNRRNIDYVEDALIDDIDT) the chain is Lumenal.

This sequence belongs to the MRL1/IGF2R family.

The protein resides in the golgi apparatus. It is found in the trans-Golgi network membrane. Its subcellular location is the endosome membrane. In Schizosaccharomyces pombe (strain 972 / ATCC 24843) (Fission yeast), this protein is Putative mannose 6-phosphate receptor-like protein C530.09c.